A 119-amino-acid polypeptide reads, in one-letter code: NADH-quinone oxidoreductase subunit A (119 aa).

Helical transmembrane passes span 7–27 (YPVL…VSIG), 63–83 (LVAI…PWGV), and 88–108 (IGWP…LGFA).

It belongs to the complex I subunit 3 family. NDH-1 is composed of 14 different subunits. Subunits NuoA, H, J, K, L, M, N constitute the membrane sector of the complex.

The protein localises to the cell inner membrane. The enzyme catalyses a quinone + NADH + 5 H(+)(in) = a quinol + NAD(+) + 4 H(+)(out). Functionally, NDH-1 shuttles electrons from NADH, via FMN and iron-sulfur (Fe-S) centers, to quinones in the respiratory chain. The immediate electron acceptor for the enzyme in this species is believed to be ubiquinone. Couples the redox reaction to proton translocation (for every two electrons transferred, four hydrogen ions are translocated across the cytoplasmic membrane), and thus conserves the redox energy in a proton gradient. The protein is NADH-quinone oxidoreductase subunit A of Burkholderia vietnamiensis (strain G4 / LMG 22486) (Burkholderia cepacia (strain R1808)).